Here is a 179-residue protein sequence, read N- to C-terminus: Large ribosomal subunit protein uL6 (179 aa).

The protein belongs to the universal ribosomal protein uL6 family. In terms of assembly, part of the 50S ribosomal subunit.

Functionally, this protein binds to the 23S rRNA, and is important in its secondary structure. It is located near the subunit interface in the base of the L7/L12 stalk, and near the tRNA binding site of the peptidyltransferase center. This Spiroplasma citri protein is Large ribosomal subunit protein uL6.